Reading from the N-terminus, the 187-residue chain is V-type ATP synthase subunit E (187 aa).

The protein belongs to the V-ATPase E subunit family.

Its function is as follows. Produces ATP from ADP in the presence of a proton gradient across the membrane. The sequence is that of V-type ATP synthase subunit E from Clostridioides difficile (strain 630) (Peptoclostridium difficile).